We begin with the raw amino-acid sequence, 214 residues long: Ribonuclease S-2 (214 aa).

The first 22 residues, M1 to G22, serve as a signal peptide directing secretion. Residues C38 and C43 are joined by a disulfide bond. An N-linked (GlcNAc...) asparagine glycan is attached at N49. Residue H53 is the Proton donor of the active site. An RNA-binding site is contributed by H53. A glycan (N-linked (GlcNAc...) asparagine) is linked at N59. C67 and C116 are joined by a disulfide. Residues D91–L92, K94, and F105 contribute to the RNA site. Residue E109 is part of the active site. RNA is bound at residue K112 to H113. H113 acts as the Proton acceptor in catalysis. Residue N160 is glycosylated (N-linked (GlcNAc...) asparagine). 2 cysteine pairs are disulfide-bonded: C175/C204 and C187/C198.

The protein belongs to the RNase T2 family.

Its subcellular location is the secreted. The protein resides in the extracellular space. It catalyses the reaction a ribonucleotidyl-ribonucleotide-RNA + H2O = a 3'-end 3'-phospho-ribonucleotide-RNA + a 5'-end dephospho-ribonucleoside-RNA + H(+). In terms of biological role, self-incompatibility (SI) is the inherited ability of a flowering plant to prevent self-fertilization by discriminating between self and non-self pollen during pollination. In many species of the Solanaceae, self-incompatibility is controlled by the single, multiallelic locus S. This stylar glycoprotein is associated with expression of self-incompatibility in potato. This chain is Ribonuclease S-2 (S-2), found in Nicotiana alata (Winged tobacco).